The primary structure comprises 185 residues: MIEASKLKAGMTFEAEGKLIRVLEASHHKPGKGNTIMRMKLRDVRTGSTFDTTYRPDEKFEQAIIETVPAQYLYKMDDTAYFMNTDTYDQYEIPVANVEQELLYILENSNVKIQFYGSEVIGVTVPTTVELTVAETQPSIKGATVTGSGKPATLETGLVVNVPDFIEAGQKLIINTAEGTYVSRA.

This sequence belongs to the elongation factor P family.

The protein resides in the cytoplasm. Its pathway is protein biosynthesis; polypeptide chain elongation. Its function is as follows. Involved in peptide bond synthesis. Stimulates efficient translation and peptide-bond synthesis on native or reconstituted 70S ribosomes in vitro. Probably functions indirectly by altering the affinity of the ribosome for aminoacyl-tRNA, thus increasing their reactivity as acceptors for peptidyl transferase. This Streptococcus pyogenes serotype M49 (strain NZ131) protein is Elongation factor P.